The primary structure comprises 402 residues: Olfactomedin-like protein 1 (402 aa).

The signal sequence occupies residues 1-28 (MMVALPGASASLVLFLAAFLPPLQHAQD). A glycan (N-linked (GlcNAc...) asparagine) is linked at N66. The stretch at 73-135 (RCQTHTNEYR…EAEEEKKIRT (63 aa)) forms a coiled coil. N-linked (GlcNAc...) asparagine glycosylation is found at N138 and N183. The region spanning 140–397 (SCDNMLMAIK…QIIYKLQTKK (258 aa)) is the Olfactomedin-like domain. A disulfide bridge connects residues C141 and C324.

Highly N-glycosylated.

Its subcellular location is the secreted. This chain is Olfactomedin-like protein 1 (Olfml1), found in Rattus norvegicus (Rat).